A 122-amino-acid polypeptide reads, in one-letter code: UPF0102 protein Rleg2_4331 (122 aa).

This sequence belongs to the UPF0102 family.

This Rhizobium leguminosarum bv. trifolii (strain WSM2304) protein is UPF0102 protein Rleg2_4331.